Reading from the N-terminus, the 804-residue chain is E3 UFM1-protein ligase 1 homolog (804 aa).

Position 1 is an N-acetylmethionine (Met-1). The segment at Ile-397–Ile-483 is disordered. Positions Ser-400–Ser-409 are enriched in low complexity. The segment covering Leu-463 to Lys-475 has biased composition (basic and acidic residues).

It belongs to the UFL1 family.

In terms of biological role, E3 UFM1-protein ligase that mediates ufmylation of target proteins. The sequence is that of E3 UFM1-protein ligase 1 homolog from Arabidopsis thaliana (Mouse-ear cress).